Reading from the N-terminus, the 329-residue chain is GTPase Obg (329 aa).

In terms of domain architecture, Obg spans Met-1 to Leu-159. Residues Ala-160–Glu-328 enclose the OBG-type G domain. Residues Gly-166–Ser-173, Phe-191–Ile-195, Asp-213–Gly-216, Asn-280–Glu-283, and Ser-309–Ile-311 contribute to the ATP site. 2 residues coordinate Mg(2+): Ser-173 and Thr-193.

It belongs to the TRAFAC class OBG-HflX-like GTPase superfamily. OBG GTPase family. In terms of assembly, monomer. Requires Mg(2+) as cofactor.

Its subcellular location is the cytoplasm. Functionally, an essential GTPase which binds GTP, GDP and possibly (p)ppGpp with moderate affinity, with high nucleotide exchange rates and a fairly low GTP hydrolysis rate. Plays a role in control of the cell cycle, stress response, ribosome biogenesis and in those bacteria that undergo differentiation, in morphogenesis control. The chain is GTPase Obg from Prochlorococcus marinus (strain SARG / CCMP1375 / SS120).